We begin with the raw amino-acid sequence, 193 residues long: Acyl carrier protein phosphodiesterase (193 aa).

The protein belongs to the AcpH family.

The enzyme catalyses holo-[ACP] + H2O = apo-[ACP] + (R)-4'-phosphopantetheine + H(+). Functionally, converts holo-ACP to apo-ACP by hydrolytic cleavage of the phosphopantetheine prosthetic group from ACP. The protein is Acyl carrier protein phosphodiesterase of Salmonella dublin (strain CT_02021853).